Here is a 156-residue protein sequence, read N- to C-terminus: S-ribosylhomocysteine lyase (156 aa).

Positions 56, 60, and 123 each coordinate Fe cation.

The protein belongs to the LuxS family. As to quaternary structure, homodimer. Fe cation is required as a cofactor.

The catalysed reaction is S-(5-deoxy-D-ribos-5-yl)-L-homocysteine = (S)-4,5-dihydroxypentane-2,3-dione + L-homocysteine. Functionally, involved in the synthesis of autoinducer 2 (AI-2) which is secreted by bacteria and is used to communicate both the cell density and the metabolic potential of the environment. The regulation of gene expression in response to changes in cell density is called quorum sensing. Catalyzes the transformation of S-ribosylhomocysteine (RHC) to homocysteine (HC) and 4,5-dihydroxy-2,3-pentadione (DPD). This Staphylococcus aureus (strain Mu3 / ATCC 700698) protein is S-ribosylhomocysteine lyase.